The sequence spans 497 residues: Ethanolamine-phosphate phospho-lyase (497 aa).

Residue Lys-278 is modified to N6-(pyridoxal phosphate)lysine. The segment at 440 to 497 is disordered; it reads TGAETESGISKNTPCRTKMPKEAQSELLRDSSLESRENPSQKRNGLCTDSLLSKRLRT. The span at 458 to 479 shows a compositional bias: basic and acidic residues; sequence MPKEAQSELLRDSSLESRENPS.

The protein belongs to the class-III pyridoxal-phosphate-dependent aminotransferase family. As to quaternary structure, homotetramer. It depends on pyridoxal 5'-phosphate as a cofactor.

It localises to the mitochondrion. The catalysed reaction is phosphoethanolamine + H2O = acetaldehyde + NH4(+) + phosphate. In terms of biological role, catalyzes the pyridoxal-phosphate-dependent breakdown of phosphoethanolamine, converting it to ammonia, inorganic phosphate and acetaldehyde. In Bos taurus (Bovine), this protein is Ethanolamine-phosphate phospho-lyase (ETNPPL).